The chain runs to 305 residues: Probable GTP 3',8-cyclase (305 aa).

A Radical SAM core domain is found at 6–228 (NHRRPLVSLR…MTRKFMQDRK (223 aa)). Arginine 15 contacts GTP. Residues cysteine 22 and cysteine 26 each coordinate [4Fe-4S] cluster. S-adenosyl-L-methionine is bound at residue tyrosine 28. Cysteine 29 contributes to the [4Fe-4S] cluster binding site. A GTP-binding site is contributed by arginine 62. Glycine 66 lines the S-adenosyl-L-methionine pocket. Threonine 92 contributes to the GTP binding site. Serine 116 serves as a coordination point for S-adenosyl-L-methionine. Lysine 153 provides a ligand contact to GTP. The [4Fe-4S] cluster site is built by cysteine 249 and cysteine 252. 254–256 (RLR) is a GTP binding site. Position 266 (cysteine 266) interacts with [4Fe-4S] cluster.

Belongs to the radical SAM superfamily. MoaA family. The cofactor is [4Fe-4S] cluster.

It carries out the reaction GTP + AH2 + S-adenosyl-L-methionine = (8S)-3',8-cyclo-7,8-dihydroguanosine 5'-triphosphate + 5'-deoxyadenosine + L-methionine + A + H(+). Its pathway is cofactor biosynthesis; molybdopterin biosynthesis. Functionally, catalyzes the cyclization of GTP to (8S)-3',8-cyclo-7,8-dihydroguanosine 5'-triphosphate. This chain is Probable GTP 3',8-cyclase, found in Methanothermobacter marburgensis (strain ATCC BAA-927 / DSM 2133 / JCM 14651 / NBRC 100331 / OCM 82 / Marburg) (Methanobacterium thermoautotrophicum).